Here is a 252-residue protein sequence, read N- to C-terminus: MGPGWRAPSAALVGGSVALFGALRRAALALPRPAAVRSRPGRVWRWRNLLVSFAHSVLAGLWALFSLWQSPELLSDIQDGYSVSGHLLVCFSSGYFIHDSLDIIFNQQSRSSWEYLVHHAMAISAFVSLIITGRFLVAAMLLLLVEVSNIFLTIRMLLKMSNVPSPALYEANKYVNLVMYFAFRLAPQVYLTWYFVRYVEVQGQGAFLMANLLLLDAMILMYFSRLLRSDFFPSLRKGSVGRDVDGEKFLID.

Residues Met-1 to Ala-29 form the signal peptide. Residues Leu-30–Arg-47 are Extracellular-facing. Residues Gly-41–Leu-235 form the TLC domain. A helical transmembrane segment spans residues Asn-48–Trp-68. The Cytoplasmic portion of the chain corresponds to Gln-69–Ser-84. A helical transmembrane segment spans residues Gly-85–Phe-105. The Extracellular segment spans residues Asn-106–Ser-124. The segment at residues Ala-125 to Val-145 is an intramembrane region (helical). Residues Glu-146–Tyr-174 lie on the Extracellular side of the membrane. A helical membrane pass occupies residues Val-175–Phe-195. Residues Val-196–Gln-202 are Cytoplasmic-facing. Residues Gly-203–Phe-223 form a helical membrane-spanning segment. The Extracellular portion of the chain corresponds to Ser-224–Asp-252.

As to quaternary structure, interacts with CACNA1C in vitro; however the relevance of the interaction in vivo is unclear.

The protein localises to the cell membrane. Its function is as follows. Regulates the composition and fluidity of the plasma membrane. Inhibits the incorporation of membrane-fluidizing phospholipids containing omega-3 long-chain polyunsaturated fatty acids (LCPUFA) and thereby promotes membrane rigidity. Does not appear to have any effect on LCPUFA synthesis. This chain is TLC domain-containing protein 1 (TLCD1), found in Gallus gallus (Chicken).